Consider the following 291-residue polypeptide: Acetylglutamate kinase (291 aa).

Substrate is bound by residues 61–62 (GG), Arg83, and Asn187.

The protein belongs to the acetylglutamate kinase family. ArgB subfamily.

The protein localises to the cytoplasm. The catalysed reaction is N-acetyl-L-glutamate + ATP = N-acetyl-L-glutamyl 5-phosphate + ADP. It participates in amino-acid biosynthesis; L-arginine biosynthesis; N(2)-acetyl-L-ornithine from L-glutamate: step 2/4. Its function is as follows. Catalyzes the ATP-dependent phosphorylation of N-acetyl-L-glutamate. This Methanoregula boonei (strain DSM 21154 / JCM 14090 / 6A8) protein is Acetylglutamate kinase.